The chain runs to 367 residues: DNA replication and repair protein RecF (367 aa).

30-37 (GANGSGKT) is a binding site for ATP.

It belongs to the RecF family.

The protein localises to the cytoplasm. Its function is as follows. The RecF protein is involved in DNA metabolism; it is required for DNA replication and normal SOS inducibility. RecF binds preferentially to single-stranded, linear DNA. It also seems to bind ATP. This Pseudomonas putida (strain W619) protein is DNA replication and repair protein RecF.